A 495-amino-acid chain; its full sequence is Aspartyl/glutamyl-tRNA(Asn/Gln) amidotransferase subunit B (495 aa).

It belongs to the GatB/GatE family. GatB subfamily. Heterotrimer of A, B and C subunits.

It carries out the reaction L-glutamyl-tRNA(Gln) + L-glutamine + ATP + H2O = L-glutaminyl-tRNA(Gln) + L-glutamate + ADP + phosphate + H(+). It catalyses the reaction L-aspartyl-tRNA(Asn) + L-glutamine + ATP + H2O = L-asparaginyl-tRNA(Asn) + L-glutamate + ADP + phosphate + 2 H(+). Allows the formation of correctly charged Asn-tRNA(Asn) or Gln-tRNA(Gln) through the transamidation of misacylated Asp-tRNA(Asn) or Glu-tRNA(Gln) in organisms which lack either or both of asparaginyl-tRNA or glutaminyl-tRNA synthetases. The reaction takes place in the presence of glutamine and ATP through an activated phospho-Asp-tRNA(Asn) or phospho-Glu-tRNA(Gln). The sequence is that of Aspartyl/glutamyl-tRNA(Asn/Gln) amidotransferase subunit B from Rippkaea orientalis (strain PCC 8801 / RF-1) (Cyanothece sp. (strain PCC 8801)).